A 365-amino-acid chain; its full sequence is Peptidylglycine alpha-hydroxylating monooxygenase (365 aa).

An N-terminal signal peptide occupies residues 1–24 (MPRISEIAASVGLLLLIGVISVDG). Disulfide bonds link cysteine 69–cysteine 114 and cysteine 102–cysteine 129. Asparagine 88 carries N-linked (GlcNAc...) asparagine glycosylation. Cu cation-binding residues include histidine 95 and histidine 96. Cu cation is bound by residues histidine 172, histidine 241, and histidine 243. Asparagine 280 carries N-linked (GlcNAc...) asparagine glycosylation. Cysteine 297 and cysteine 318 are joined by a disulfide. Methionine 317 is a Cu cation binding site.

It belongs to the copper type II ascorbate-dependent monooxygenase family. Cu(2+) is required as a cofactor. Expressed in the central nervous system (CNS) in a small number of CNS neurons (approximately a few hundred). Expression is present both in cell bodies and within neuropil regions. It is strongly expressed in neuroendocrine neurons (at protein level).

It localises to the secreted. The catalysed reaction is a [peptide]-C-terminal glycine + 2 L-ascorbate + O2 = a [peptide]-C-terminal (2S)-2-hydroxyglycine + 2 monodehydro-L-ascorbate radical + H2O. In terms of biological role, monooxygenase that catalyzes an essential reaction in C-terminal alpha-amidation of peptides. Produces an unstable peptidyl(2-hydroxyglycine) intermediate. C-terminal amidation of peptides is required for normal developmental transitions and for biosynthesis of secretory peptides throughout the life. The polypeptide is Peptidylglycine alpha-hydroxylating monooxygenase (Phm) (Drosophila melanogaster (Fruit fly)).